Consider the following 1633-residue polypeptide: MKKRRQGPINKRVDFLSNKVNKYSIRKFTVGTASILVGATLMFGAADNEAKAAEDNQLESASKEEQKGSRDNESSKLNQVDLDNGSHSSEKTTNVNNATEVKKVEAPTTSDVSKPKANEAVVTNESTKPKTTEAPTVNEESIAETPKTSTTQQDSTEKNNPSLKDNLNSSSTTSKESKTDEHSTKQAQMSTNKSNLDTNDSPTQSEKTSSQANNDSTDNQSAPSKQLDSKPSEQKVYKTKFNDEPTQDVEHTTTKLKTPSISTDSSVNDKQDYTRSAVASLGVDSNETEAITNAVRDNLDLKAASREQINEAIIAEALKKDFSNPDYGVDTPLALNTSQSKNSPHKSASPRMNLMSLAAEPNSGKNVNDKVKITNPTLSLNKSNNHANNVIWPTSNEQFNLKANYELDDSIKEGDTFTIKYGQYIRPGGLELPAIKTQLRSKDGSIVANGVYDKTTNTTTYTFTNYVDQYQNITGSFDLIATPKRETAIKDNQNYPMEVTIANEVVKKDFIVDYGNKKDNTTTAAVANVDNVNNKHNEVVYLNQNNQNPKYAKYFSTVKNGKFIPGEVKVYEVTDTNAMVDSFNPDLNSSNVKDVTSQFTPKVSADGTRVDINFARSMANGKKYIVTQAVRPTGTGNVYTEYWLTRDGTTNTNDFYRGTKSTTVTYLNGSSTAQGDNPTYSLGDYVWLDKNKNGVQDDDEKGLAGVYVTLKDSNNRELQRVTTDQSGHYQFDNLQNGTYTVEFAIPDNYTPSPANNSTNDAIDSDGERDGTRKVVVAKGTINNADNMTVDTGFYLTPKYNVGDYVWEDTNKDGIQDDNEKGISNVKVTLKNKNGDTIGTTTTDSNGKYEFTGLENGDYTIEFETPEGYTPTKQNSGSDEGKDSNGTKTTVTVKDADNKTIDSGFYKPIYNLGDYVWEDTNKDGIQDDSEKGISGVKVTLKDKNGNAIGTTTTDASGHYQFKGLENGSYTVEFETPSGYTPTKANSGQDITVDSNGITTTGIINGADNLTIDSGFYKTPKYSVGDYVWEDTNKDGIQDDNEKGISGVKVTLKDEKGNIISTTTTDENGKYQFDNLDSGNYIIHFEKPEGMTQTTANSGNDDEKDADGEDVRVTITDHDDFSIDNGYFDDDSDSDSDADSDSDSDSDSDADSDSDADSDSDSDSDSDSDSDSDSDSDSDSDSDSDSDADSDSDADSDSDSDSDSDSDSDSDSDSDSDSDSDSDSDADSDSDADSDSDADSDSDADSDSDSDSDSDADSDSDSDSDSDADSDSDSDSDSDADSDSDSDSDSDADSDSDSDSDSDADSDSDSDSDSDSDSDSDSDSDSDSDSDSDSDSDSDSDSDSDSDADSDSDSDSDSDADSDSDADSDSDSDSDSDSDSDSDADSDSDSDSDSDSDSDSDADSDSDSDSDSDAESDSDSDSDSDSDSDSDSDSDSDSDSDSDSDSDSDADSDSDSDSDSDSDSDSDSDSDSDSDSDSDADSDSYSDSDSDSDSDSDSDSDSDSDSDSDSDSDSDSDSDSDSDSDSDSDSDSDSDSDSDSDSDSDSDSDSDSDSDSDSDSDSDSDSDSDSDSDSDSDSDSDSDSDSDSDKNAKDKLPDTGANEDHDSKGTLLGTLFAGLGALLLGRRRKKDNKEK.

Positions 1–45 are cleaved as a signal peptide; it reads MKKRRQGPINKRVDFLSNKVNKYSIRKFTVGTASILVGATLMFGA. Positions 46–678 are ligand binding A region; it reads ADNEAKAAED…GSSTAQGDNP (633 aa). The segment at 51-269 is disordered; sequence KAAEDNQLES…SISTDSSVND (219 aa). Residues 61–74 show a composition bias toward basic and acidic residues; that stretch reads ASKEEQKGSRDNES. Polar residues-rich tracts occupy residues 85–99 and 146–168; these read GSHS…NNAT and PKTS…DNLN. Positions 175–184 are enriched in basic and acidic residues; that stretch reads KESKTDEHST. A compositionally biased stretch (polar residues) spans 186 to 226; sequence QAQMSTNKSNLDTNDSPTQSEKTSSQANNDSTDNQSAPSKQ. Residues 227-253 are compositionally biased toward basic and acidic residues; the sequence is LDSKPSEQKVYKTKFNDEPTQDVEHTT. Residues 255 to 266 show a composition bias toward polar residues; it reads KLKTPSISTDSS. CNA-B domains follow at residues 679 to 797, 798 to 907, 908 to 1018, and 1019 to 1129; these read TYSL…YLTP, KYNV…FYKP, IYNL…YKTP, and KYSV…FDDD. Positions 679–1129 are type I collagen binding region; sequence TYSLGDYVWL…SIDNGYFDDD (451 aa). The tract at residues 862–889 is disordered; the sequence is FETPEGYTPTKQNSGSDEGKDSNGTKTT. The segment at 1085 to 1608 is disordered; sequence KPEGMTQTTA…ANEDHDSKGT (524 aa). Over residues 1107-1119 the composition is skewed to basic and acidic residues; sequence EDVRVTITDHDDF. Over residues 1125–1584 the composition is skewed to acidic residues; that stretch reads YFDDDSDSDS…DSDSDSDSDS (460 aa). Residues 1585–1606 are compositionally biased toward basic and acidic residues; that stretch reads DSDKNAKDKLPDTGANEDHDSK. Residues 1594–1598 carry the LPXTG sorting signal motif; the sequence is LPDTG. T1597 carries the pentaglycyl murein peptidoglycan amidated threonine modification. The propeptide at 1598 to 1633 is removed by sortase; the sequence is GANEDHDSKGTLLGTLFAGLGALLLGRRRKKDNKEK.

The protein belongs to the serine-aspartate repeat-containing protein (SDr) family.

It localises to the secreted. It is found in the cell wall. Functionally, binds to type I collagen via alpha-2(I) or alpha-1(I) chains. In Staphylococcus epidermidis (strain ATCC 12228 / FDA PCI 1200), this protein is Serine-aspartate repeat-containing protein F (sdrF).